The primary structure comprises 260 residues: Mantle protein (260 aa).

The signal sequence occupies residues 1–16 (MLAVLLFAALVATAYS).

As to expression, prismatic layer of shell (at protein level). Expressed primarily in the mantle with highest level in the mantle edge and lower level in the mantle pallium.

Its subcellular location is the secreted. The chain is Mantle protein from Pinctada maxima (Silver-lipped pearl oyster).